Reading from the N-terminus, the 181-residue chain is Ribulose bisphosphate carboxylase small subunit 2B, chloroplastic (181 aa).

The transit peptide at 1 to 54 (MASSMFSSTAVVTSPAQATMVAPFTGLKSSASFPVTRKANNDITSITSNGGRVS) directs the protein to the chloroplast.

Belongs to the RuBisCO small chain family. Heterohexadecamer of 8 large and 8 small subunits.

The protein resides in the plastid. It localises to the chloroplast. Functionally, ruBisCO catalyzes two reactions: the carboxylation of D-ribulose 1,5-bisphosphate, the primary event in carbon dioxide fixation, as well as the oxidative fragmentation of the pentose substrate. Both reactions occur simultaneously and in competition at the same active site. Although the small subunit is not catalytic it is essential for maximal activity. The chain is Ribulose bisphosphate carboxylase small subunit 2B, chloroplastic (RBCS-2B) from Arabidopsis thaliana (Mouse-ear cress).